The chain runs to 296 residues: NAD kinase (296 aa).

The active-site Proton acceptor is the aspartate 72. NAD(+) contacts are provided by residues 72 to 73 (DG), 146 to 147 (ND), arginine 157, lysine 174, aspartate 176, 187 to 192 (TAYALS), and glutamine 247.

This sequence belongs to the NAD kinase family. A divalent metal cation serves as cofactor.

It is found in the cytoplasm. The enzyme catalyses NAD(+) + ATP = ADP + NADP(+) + H(+). Its function is as follows. Involved in the regulation of the intracellular balance of NAD and NADP, and is a key enzyme in the biosynthesis of NADP. Catalyzes specifically the phosphorylation on 2'-hydroxyl of the adenosine moiety of NAD to yield NADP. The protein is NAD kinase of Pseudomonas savastanoi pv. phaseolicola (strain 1448A / Race 6) (Pseudomonas syringae pv. phaseolicola (strain 1448A / Race 6)).